A 241-amino-acid polypeptide reads, in one-letter code: Biosynthetic peptidoglycan transglycosylase (241 aa).

The chain crosses the membrane as a helical span at residues Ala-19 to Val-39.

The protein belongs to the glycosyltransferase 51 family.

It localises to the cell inner membrane. The enzyme catalyses [GlcNAc-(1-&gt;4)-Mur2Ac(oyl-L-Ala-gamma-D-Glu-L-Lys-D-Ala-D-Ala)](n)-di-trans,octa-cis-undecaprenyl diphosphate + beta-D-GlcNAc-(1-&gt;4)-Mur2Ac(oyl-L-Ala-gamma-D-Glu-L-Lys-D-Ala-D-Ala)-di-trans,octa-cis-undecaprenyl diphosphate = [GlcNAc-(1-&gt;4)-Mur2Ac(oyl-L-Ala-gamma-D-Glu-L-Lys-D-Ala-D-Ala)](n+1)-di-trans,octa-cis-undecaprenyl diphosphate + di-trans,octa-cis-undecaprenyl diphosphate + H(+). It functions in the pathway cell wall biogenesis; peptidoglycan biosynthesis. Its function is as follows. Peptidoglycan polymerase that catalyzes glycan chain elongation from lipid-linked precursors. The chain is Biosynthetic peptidoglycan transglycosylase from Cronobacter sakazakii (strain ATCC BAA-894) (Enterobacter sakazakii).